The sequence spans 245 residues: Small ribosomal subunit protein uS3 (245 aa).

Residues 21–92 (LNEFLTRELA…SVELYAEKVA (72 aa)) form the KH type-2 domain. The segment at 215 to 245 (EEILPTTPVSEQKGAKPEVPVMPQGAPVPTA) is disordered.

It belongs to the universal ribosomal protein uS3 family.

It is found in the cytoplasm. It localises to the nucleus. The protein localises to the nucleolus. Its subcellular location is the mitochondrion inner membrane. The protein resides in the cytoskeleton. It is found in the spindle. It catalyses the reaction 2'-deoxyribonucleotide-(2'-deoxyribose 5'-phosphate)-2'-deoxyribonucleotide-DNA = a 3'-end 2'-deoxyribonucleotide-(2,3-dehydro-2,3-deoxyribose 5'-phosphate)-DNA + a 5'-end 5'-phospho-2'-deoxyribonucleoside-DNA + H(+). Its function is as follows. Component of the small ribosomal subunit. The ribosome is a large ribonucleoprotein complex responsible for the synthesis of proteins in the cell. Has endonuclease activity and plays a role in repair of damaged DNA. Also involved in other processes including regulation of transcription, translation of its cognate mRNA, spindle formation and chromosome movement during mitosis, and apoptosis. The chain is Small ribosomal subunit protein uS3 (rps3) from Ictalurus punctatus (Channel catfish).